Consider the following 203-residue polypeptide: Peptide deformylase (203 aa).

Fe cation-binding residues include Cys130 and His173. Residue Glu174 is part of the active site. Residue His177 participates in Fe cation binding.

Belongs to the polypeptide deformylase family. Fe(2+) is required as a cofactor.

The catalysed reaction is N-terminal N-formyl-L-methionyl-[peptide] + H2O = N-terminal L-methionyl-[peptide] + formate. In terms of biological role, removes the formyl group from the N-terminal Met of newly synthesized proteins. Requires at least a dipeptide for an efficient rate of reaction. N-terminal L-methionine is a prerequisite for activity but the enzyme has broad specificity at other positions. The protein is Peptide deformylase of Streptococcus pneumoniae serotype 2 (strain D39 / NCTC 7466).